A 206-amino-acid chain; its full sequence is ATP phosphoribosyltransferase (206 aa).

Belongs to the ATP phosphoribosyltransferase family. Short subfamily. Heteromultimer composed of HisG and HisZ subunits.

It is found in the cytoplasm. It carries out the reaction 1-(5-phospho-beta-D-ribosyl)-ATP + diphosphate = 5-phospho-alpha-D-ribose 1-diphosphate + ATP. It participates in amino-acid biosynthesis; L-histidine biosynthesis; L-histidine from 5-phospho-alpha-D-ribose 1-diphosphate: step 1/9. In terms of biological role, catalyzes the condensation of ATP and 5-phosphoribose 1-diphosphate to form N'-(5'-phosphoribosyl)-ATP (PR-ATP). Has a crucial role in the pathway because the rate of histidine biosynthesis seems to be controlled primarily by regulation of HisG enzymatic activity. This chain is ATP phosphoribosyltransferase, found in Thermus thermophilus (strain ATCC 27634 / DSM 579 / HB8).